The sequence spans 549 residues: Cation/acetate symporter ActP (549 aa).

13 helical membrane-spanning segments follow: residues 33-53, 77-97, 103-123, 148-168, 183-203, 206-226, 262-282, 303-323, 355-375, 404-424, 428-448, 464-484, and 493-513; these read WQAIIMFLIFVVFTLGITYWA, LAIAGDYMSAASFLGISALVF, GLIYSLGFLVGWPIILFLIAE, ILSACGSLVVVALYLIAQMVG, IAVVLVGVLMMMYVLFGGMLA, WVQIIKAVLLLFGASFMAFMV, ISALSLGLGLMFGTAGLPHIL, GFMGYFYILTFIIGFGAIMLV, LFLGFISAVAFATILAVVAGL, VSKITVLILGVIAIILGVLFE, IAFMVGLAFAIAASCNFPIIL, GGWLGLITAVVLMILGPTIWV, and IFPYEYPALFSISVAFLGIWF.

It belongs to the sodium:solute symporter (SSF) (TC 2.A.21) family.

It localises to the cell inner membrane. Transports acetate. This Escherichia coli O8 (strain IAI1) protein is Cation/acetate symporter ActP.